A 79-amino-acid polypeptide reads, in one-letter code: Antimicrobial peptide ToAP2 (79 aa).

The signal sequence occupies residues Met1–Ala23. The propeptide occupies Ser50–Tyr79.

It belongs to the non-disulfide-bridged peptide (NDBP) superfamily. Medium-length antimicrobial peptide (group 3) family. Expressed by the venom gland.

Its subcellular location is the secreted. The protein localises to the target cell membrane. In terms of biological role, antimicrobial peptide. Shows antibacterial activity against all M.massiliense bacterial strains tested. Has antifungal activity against Candida spp. and two Cryptococcus neoformans strains with MICs values ranging from 6.25 to 200 uM. Also shows an inhibitory activity on C.albicans biofilms at high concentrations. Exhibits chemotactic activity for monocytes, neutrophils, and eosinophils. Shows low cytotoxic activity and has weak hemolytic activity on human erythrocytes. In vivo, treatment of infected mice with M.massiliense reduces the bacterial load in the liver, lung, and spleen. May act by disrupting the integrity of the bacterial cell membrane. This is Antimicrobial peptide ToAP2 from Tityus obscurus (Amazonian scorpion).